Here is a 62-residue protein sequence, read N- to C-terminus: Small ribosomal subunit protein uS14 (62 aa).

4 residues coordinate Zn(2+): cysteine 25, cysteine 28, cysteine 41, and cysteine 44.

The protein belongs to the universal ribosomal protein uS14 family. Zinc-binding uS14 subfamily. Part of the 30S ribosomal subunit. Contacts proteins S3 and S10. It depends on Zn(2+) as a cofactor.

In terms of biological role, binds 16S rRNA, required for the assembly of 30S particles and may also be responsible for determining the conformation of the 16S rRNA at the A site. This is Small ribosomal subunit protein uS14 from Hydrogenobaculum sp. (strain Y04AAS1).